The chain runs to 692 residues: MTREFSLENTRNIGIMAHIDAGKTTATERILYYTGRIHKIGETHEGASQMDWMEQEQERGITITSAATTAQWKGHRVNIIDTPGHVDFTVEVERSLRVLDGAVAVLDAQSGVEPQTETVWRQATTYGVPRIVFVNKMDKIGADFLYSVGTLHDRLQANAHPLQLPIGAEDEFNGIIDLVEECAYMYANDLGTDIERIEIPEEHQELAAEYRGKLIEAVAELDEELMMKYLEGEEISKEELKAAIRKATTSVEFFPVICGSAFKNKGVQLMLDAVIDYLPSPLDVPAIKGIVPDTDEEVERHSSDEEPFSALAFKIMTDPYVGKLTFFRVYSGTLNSGSYVKNSTKGKRERVGRILQMHANSREEISTVYAGDIAAAVGLKDTTTGDTLCDEKNLVILESMEFPEPVISVAIEPKSKADQDKMGTALAKLSEEDPTFRAHTDQETGQTIIAGMGELHLDIIVDRLRREFKVEANVGAPQVAYRETFRAAAKVEGKFARQSGGRGQFGHVWIEFEPNEEGKGFEFENKIVGGVVPREYIPAVQAGLEDALQNGVLAGYPVIDVKAALVDGSYHDVDSSEMAFKIAASMALKAAVSKCNPVILEPMMKVEVVIPEEYMGDIMGDVTSRRGRVEGMEARGNAQVVRAMVPLSEMFGYATALRSNTQGRGTFSMVFDHYEEVPRSISEEIIKKNKGE.

The region spanning 8 to 282 is the tr-type G domain; sequence ENTRNIGIMA…AVIDYLPSPL (275 aa). Residues 17–24, 81–85, and 135–138 contribute to the GTP site; these read AHIDAGKT, DTPGH, and NKMD.

The protein belongs to the TRAFAC class translation factor GTPase superfamily. Classic translation factor GTPase family. EF-G/EF-2 subfamily.

It is found in the cytoplasm. In terms of biological role, catalyzes the GTP-dependent ribosomal translocation step during translation elongation. During this step, the ribosome changes from the pre-translocational (PRE) to the post-translocational (POST) state as the newly formed A-site-bound peptidyl-tRNA and P-site-bound deacylated tRNA move to the P and E sites, respectively. Catalyzes the coordinated movement of the two tRNA molecules, the mRNA and conformational changes in the ribosome. The polypeptide is Elongation factor G (Bacillus cytotoxicus (strain DSM 22905 / CIP 110041 / 391-98 / NVH 391-98)).